A 206-amino-acid polypeptide reads, in one-letter code: ATP-dependent Clp protease proteolytic subunit 1 (206 aa).

Ser106 (nucleophile) is an active-site residue. The active site involves His131.

Belongs to the peptidase S14 family. As to quaternary structure, fourteen ClpP subunits assemble into 2 heptameric rings which stack back to back to give a disk-like structure with a central cavity, resembling the structure of eukaryotic proteasomes.

It is found in the cytoplasm. It carries out the reaction Hydrolysis of proteins to small peptides in the presence of ATP and magnesium. alpha-casein is the usual test substrate. In the absence of ATP, only oligopeptides shorter than five residues are hydrolyzed (such as succinyl-Leu-Tyr-|-NHMec, and Leu-Tyr-Leu-|-Tyr-Trp, in which cleavage of the -Tyr-|-Leu- and -Tyr-|-Trp bonds also occurs).. Its function is as follows. Cleaves peptides in various proteins in a process that requires ATP hydrolysis. Has a chymotrypsin-like activity. Plays a major role in the degradation of misfolded proteins. This chain is ATP-dependent Clp protease proteolytic subunit 1, found in Methylococcus capsulatus (strain ATCC 33009 / NCIMB 11132 / Bath).